The following is a 274-amino-acid chain: MQEYLNFLKYIKENGVLKGDRTGTGTRSIFGYQMRFDLQKGFPLVTTKKIHIPSVVHELLWFLSGSTNIKYLNDNNVRIWNEWATVDGELGPIYGKQWRDFNGQGIDQIADVIQMLKTNPNSRRILVSAWNPCVVPSEKISPQENVVKGNSALPPCHAMFQFYVANNKLSCMLTQRSADAFLGVPFNIASYSLLTNMVAQQCNLDVGEFIWSGGDCHIYNNHIEQVNEQLSREPLALPTLKILRKPNSIFDYKYEDFEFENYNHHPAIKAKISV.

Residue R21 participates in dUMP binding. Residue H51 coordinates (6R)-5,10-methylene-5,6,7,8-tetrahydrofolate. 123–124 (RR) is a binding site for dUMP. The Nucleophile role is filled by C156. DUMP is bound by residues 176-179 (RSAD), N187, and 217-219 (HIY). Residue D179 coordinates (6R)-5,10-methylene-5,6,7,8-tetrahydrofolate. S273 lines the (6R)-5,10-methylene-5,6,7,8-tetrahydrofolate pocket.

It belongs to the thymidylate synthase family. Bacterial-type ThyA subfamily. In terms of assembly, homodimer.

Its subcellular location is the cytoplasm. The enzyme catalyses dUMP + (6R)-5,10-methylene-5,6,7,8-tetrahydrofolate = 7,8-dihydrofolate + dTMP. Its pathway is pyrimidine metabolism; dTTP biosynthesis. Its function is as follows. Catalyzes the reductive methylation of 2'-deoxyuridine-5'-monophosphate (dUMP) to 2'-deoxythymidine-5'-monophosphate (dTMP) while utilizing 5,10-methylenetetrahydrofolate (mTHF) as the methyl donor and reductant in the reaction, yielding dihydrofolate (DHF) as a by-product. This enzymatic reaction provides an intracellular de novo source of dTMP, an essential precursor for DNA biosynthesis. In Francisella tularensis subsp. tularensis (strain SCHU S4 / Schu 4), this protein is Thymidylate synthase.